The sequence spans 514 residues: Lysine--tRNA ligase (514 aa).

The segment covering 1–13 has biased composition (low complexity); the sequence is MSKPNNQNQQNNQ. Residues 1–21 form a disordered region; it reads MSKPNNQNQQNNQEPAPEDAN. Mg(2+) is bound by residues E422 and E429.

Belongs to the class-II aminoacyl-tRNA synthetase family. In terms of assembly, homodimer. Requires Mg(2+) as cofactor.

The protein resides in the cytoplasm. It carries out the reaction tRNA(Lys) + L-lysine + ATP = L-lysyl-tRNA(Lys) + AMP + diphosphate. This is Lysine--tRNA ligase from Psychrobacter cryohalolentis (strain ATCC BAA-1226 / DSM 17306 / VKM B-2378 / K5).